The primary structure comprises 510 residues: Glycosyl hydrolase YngK (510 aa).

The first 30 residues, 1-30 (MKVCQKSIVRFLVSLIIGTFVISVPFMANA), serve as a signal peptide directing secretion.

This sequence belongs to the glycosyl hydrolase-like 10 (GHL10) family.

This chain is Glycosyl hydrolase YngK (yngK), found in Bacillus subtilis (strain 168).